The following is a 341-amino-acid chain: Dihydroorotate dehydrogenase (quinone) (341 aa).

FMN contacts are provided by residues Ala-61–Lys-65 and Thr-85. A substrate-binding site is contributed by Lys-65. Asn-110–Phe-114 serves as a coordination point for substrate. Residues Asn-138 and Asn-171 each contribute to the FMN site. Residue Asn-171 participates in substrate binding. Ser-174 acts as the Nucleophile in catalysis. Asn-176 is a substrate binding site. Positions 216 and 244 each coordinate FMN. Position 245–246 (Asn-245–Thr-246) interacts with substrate. Residues Gly-267, Gly-296, and Tyr-317–Ser-318 each bind FMN.

It belongs to the dihydroorotate dehydrogenase family. Type 2 subfamily. As to quaternary structure, monomer. FMN is required as a cofactor.

It localises to the cell membrane. The enzyme catalyses (S)-dihydroorotate + a quinone = orotate + a quinol. It functions in the pathway pyrimidine metabolism; UMP biosynthesis via de novo pathway; orotate from (S)-dihydroorotate (quinone route): step 1/1. Catalyzes the conversion of dihydroorotate to orotate with quinone as electron acceptor. The chain is Dihydroorotate dehydrogenase (quinone) from Pseudomonas putida (strain W619).